Here is a 170-residue protein sequence, read N- to C-terminus: MGKGELELAGFILSEAFDEKAEKEKVEKEKALKEKTEKEKAEKEKAEKEKVEKEKAEKEKAAKEKAAKEKAEREKSKSAVSPATTNQNSNKGNVEKGVAIGVLAGGAVTGVAVGGAYLADKYIASKAAGAAVNVIELTPIPNAANTANNAAAVSQGSHRWQPLPYYLFNI.

Residues 15–81 (EAFDEKAEKE…EREKSKSAVS (67 aa)) are a coiled coil. The segment covering 20-77 (KAEKEKVEKEKALKEKTEKEKAEKEKAEKEKVEKEKAEKEKAAKEKAAKEKAEREKSK) has biased composition (basic and acidic residues). Residues 20 to 95 (KAEKEKVEKE…NQNSNKGNVE (76 aa)) are disordered. The segment covering 78–92 (SAVSPATTNQNSNKG) has biased composition (polar residues). The chain crosses the membrane as a helical span at residues 98–118 (VAIGVLAGGAVTGVAVGGAYL).

It is found in the membrane. This is an uncharacterized protein from Dictyostelium discoideum (Social amoeba).